Here is a 232-residue protein sequence, read N- to C-terminus: LexA repressor (232 aa).

Residues 1 to 10 show a composition bias toward polar residues; sequence MDDSNDSSSA. Residues 1-22 are disordered; it reads MDDSNDSSSAGPDGRLHAVDPS. A DNA-binding region (H-T-H motif) is located at residues 47-67; the sequence is IREIGDAVGLTSTSSVAHQLR. Active-site for autocatalytic cleavage activity residues include Ser156 and Lys193.

Belongs to the peptidase S24 family. Homodimer.

The catalysed reaction is Hydrolysis of Ala-|-Gly bond in repressor LexA.. Represses a number of genes involved in the response to DNA damage (SOS response), including recA and lexA. In the presence of single-stranded DNA, RecA interacts with LexA causing an autocatalytic cleavage which disrupts the DNA-binding part of LexA, leading to derepression of the SOS regulon and eventually DNA repair. The sequence is that of LexA repressor from Mycolicibacterium paratuberculosis (strain ATCC BAA-968 / K-10) (Mycobacterium paratuberculosis).